The chain runs to 96 residues: Co-chaperonin GroES (96 aa).

This sequence belongs to the GroES chaperonin family. Heptamer of 7 subunits arranged in a ring. Interacts with the chaperonin GroEL.

It localises to the cytoplasm. Its function is as follows. Together with the chaperonin GroEL, plays an essential role in assisting protein folding. The GroEL-GroES system forms a nano-cage that allows encapsulation of the non-native substrate proteins and provides a physical environment optimized to promote and accelerate protein folding. GroES binds to the apical surface of the GroEL ring, thereby capping the opening of the GroEL channel. In Leptothrix cholodnii (strain ATCC 51168 / LMG 8142 / SP-6) (Leptothrix discophora (strain SP-6)), this protein is Co-chaperonin GroES.